Consider the following 292-residue polypeptide: Shikimate dehydrogenase (NADP(+)) (292 aa).

Shikimate contacts are provided by residues 25-27 (SKS) and threonine 72. Lysine 76 serves as the catalytic Proton acceptor. Shikimate-binding residues include asparagine 97 and aspartate 113. NADP(+)-binding positions include 137–141 (GAGGA), 161–166 (NRTQSK), and methionine 230. Tyrosine 232 is a binding site for shikimate. Glycine 254 serves as a coordination point for NADP(+).

It belongs to the shikimate dehydrogenase family. Homodimer.

It carries out the reaction shikimate + NADP(+) = 3-dehydroshikimate + NADPH + H(+). Its pathway is metabolic intermediate biosynthesis; chorismate biosynthesis; chorismate from D-erythrose 4-phosphate and phosphoenolpyruvate: step 4/7. Functionally, involved in the biosynthesis of the chorismate, which leads to the biosynthesis of aromatic amino acids. Catalyzes the reversible NADPH linked reduction of 3-dehydroshikimate (DHSA) to yield shikimate (SA). The polypeptide is Shikimate dehydrogenase (NADP(+)) (Shewanella sp. (strain MR-7)).